A 337-amino-acid polypeptide reads, in one-letter code: 2-oxoglutarate receptor 1 (337 aa).

Residues 1 to 37 lie on the Extracellular side of the membrane; that stretch reads MIETLDSPANDSDFLDYITALENCTDEQISFKMQYLP. N-linked (GlcNAc...) asparagine glycosylation is present at asparagine 23. A helical membrane pass occupies residues 38–58; it reads VIYSIIFLVGFPGNTVAISIY. Residues 59–69 lie on the Cytoplasmic side of the membrane; sequence VFKMRPWKSST. The chain crosses the membrane as a helical span at residues 70–90; that stretch reads IIMLNLALTDLLYLTSLPFLI. Topologically, residues 91 to 116 are extracellular; sequence HYYASGENWIFGDFMCKFIRFGFHFN. Cysteines 106 and 183 form a disulfide. A helical membrane pass occupies residues 117–137; it reads LYSSILFLTCFSLFRYIVIIH. At 138-151 the chain is on the cytoplasmic side; sequence PMSCFSIQKTRWAV. The chain crosses the membrane as a helical span at residues 152–172; it reads VACAGVWVISLVAVMPMTFLI. At 173 to 200 the chain is on the extracellular side; the sequence is TSTTRTNRSACLDLTSSDDLTTIKWYNL. The chain crosses the membrane as a helical span at residues 201–221; the sequence is ILTATTFCLPLLIVTLCYTTI. The Cytoplasmic segment spans residues 222–242; that stretch reads ISTLTHGPRTHSCFKQKARRL. The helical transmembrane segment at 243-263 threads the bilayer; that stretch reads TILLLLVFYVCFLPFHILRVI. Residues 264 to 284 lie on the Extracellular side of the membrane; sequence RIESRLLSISCSIESHIHEAY. A helical transmembrane segment spans residues 285-305; it reads IVSRPLAALNTFGNLLLYVVV. Topologically, residues 306 to 337 are cytoplasmic; the sequence is SNNFQQAFCSAVRCKAIGDLEQAKKDSCSNNP.

This sequence belongs to the G-protein coupled receptor 1 family. Highly expressed in mast cells and is found predominantly in the tissues of the respiratory tract and kidneys.

Its subcellular location is the cell membrane. In terms of biological role, g protein-coupled receptor for dicarboxylates and amino dicarboxylates. Receptor for itaconate, a metabolite produced by myeloid lineages. In the respiratory epithelium, couples the binding of itaconate to the activation of GNA11 and downstream intracellular Ca(2+) release, leading to mucocilliary clearance of airborne pathogens. Receptor for leukotriene E4 (LTE4) produced by mast cells upon allergic inflammation. Binds with high affinity to LTE4 and elicits mucin release from pulmonary epithelium in response to airborne fungi allergens. Regulates mucin-producing goblet cell homeostasis. Receptor for alpha-ketoglutarate produced by proximal tubule renal cells upon metabolic alkalosis. In an intrarenal paracrine signaling pathway, binds alpha-ketoglutarate and drives transepithelial salt reabsorption and bicarbonate secretion by SLC26A4/pendrin-positive intercalated cells. The polypeptide is 2-oxoglutarate receptor 1 (Oxgr1) (Rattus norvegicus (Rat)).